The primary structure comprises 205 residues: CMRF35-like molecule 2 (205 aa).

An N-terminal signal peptide occupies residues 1–17; it reads MWLLPALLLLCLSGCLS. The Ig-like V-type domain occupies 18-120; it reads LKGPGSVTGT…VLDSWSRDPS (103 aa). Residues 18-173 are Extracellular-facing; that stretch reads LKGPGSVTGT…NSGFRLSSPH (156 aa). A disulfide bond links Cys-36 and Cys-104. N-linked (GlcNAc...) asparagine glycosylation occurs at Asn-154. The helical transmembrane segment at 174 to 194 threads the bilayer; sequence FLLVVLLKLPLLLSMLGAVFW. Residues 195 to 205 are Cytoplasmic-facing; that stretch reads VNRPQWAPPGR.

It belongs to the CD300 family. In terms of assembly, interacts with TYROBP. N-glycosylated. As to expression, present on the surface of mature hematopoietic cells of the monocyte and myeloid lineages (at protein level).

Its subcellular location is the cell membrane. Probably acts as an activating receptor. This is CMRF35-like molecule 2 (CD300E) from Homo sapiens (Human).